The sequence spans 349 residues: N-acetyl-gamma-glutamyl-phosphate reductase (349 aa).

The active site involves cysteine 149.

This sequence belongs to the NAGSA dehydrogenase family. Type 1 subfamily.

It localises to the cytoplasm. It catalyses the reaction N-acetyl-L-glutamate 5-semialdehyde + phosphate + NADP(+) = N-acetyl-L-glutamyl 5-phosphate + NADPH + H(+). Its pathway is amino-acid biosynthesis; L-arginine biosynthesis; N(2)-acetyl-L-ornithine from L-glutamate: step 3/4. Catalyzes the NADPH-dependent reduction of N-acetyl-5-glutamyl phosphate to yield N-acetyl-L-glutamate 5-semialdehyde. The polypeptide is N-acetyl-gamma-glutamyl-phosphate reductase (Acinetobacter baumannii (strain AB307-0294)).